The chain runs to 180 residues: Bifunctional protein PyrR (180 aa).

Positions 101 to 113 (VILVDDVLYTGRT) match the PRPP-binding motif.

This sequence belongs to the purine/pyrimidine phosphoribosyltransferase family. PyrR subfamily. Homodimer and homohexamer; in equilibrium.

The catalysed reaction is UMP + diphosphate = 5-phospho-alpha-D-ribose 1-diphosphate + uracil. Regulates transcriptional attenuation of the pyrimidine nucleotide (pyr) operon by binding in a uridine-dependent manner to specific sites on pyr mRNA. This disrupts an antiterminator hairpin in the RNA and favors formation of a downstream transcription terminator, leading to a reduced expression of downstream genes. In terms of biological role, also displays a weak uracil phosphoribosyltransferase activity which is not physiologically significant. The sequence is that of Bifunctional protein PyrR from Bacillus thuringiensis subsp. konkukian (strain 97-27).